A 210-amino-acid polypeptide reads, in one-letter code: Secreted isochorismatase effector Isc1 (210 aa).

Active-site residues include Asp-25, Lys-90, and Cys-124.

It belongs to the isochorismatase family.

Its subcellular location is the secreted. The protein localises to the host cytoplasm. It localises to the host nucleus. It catalyses the reaction isochorismate + H2O = (2S,3S)-2,3-dihydroxy-2,3-dihydrobenzoate + pyruvate. Secreted isochorismatase required for full virulence of P.sojae. Suppresses salicylate-mediated innate immunity of the host by disrupting the plant salicylate metabolism pathway via hydrolysis of its isochorismate precursor. This is Secreted isochorismatase effector Isc1 from Phytophthora sojae (strain P6497) (Soybean stem and root rot agent).